The sequence spans 700 residues: Elongation factor G 1 (700 aa).

The 283-residue stretch at 8–290 (QNYRNIGISA…AVIEFMPSPI (283 aa)) folds into the tr-type G domain. Residues 17–24 (AHIDAGKT), 88–92 (DTPGH), and 142–145 (NKMD) each bind GTP.

Belongs to the TRAFAC class translation factor GTPase superfamily. Classic translation factor GTPase family. EF-G/EF-2 subfamily.

The protein resides in the cytoplasm. Functionally, catalyzes the GTP-dependent ribosomal translocation step during translation elongation. During this step, the ribosome changes from the pre-translocational (PRE) to the post-translocational (POST) state as the newly formed A-site-bound peptidyl-tRNA and P-site-bound deacylated tRNA move to the P and E sites, respectively. Catalyzes the coordinated movement of the two tRNA molecules, the mRNA and conformational changes in the ribosome. This Polaromonas sp. (strain JS666 / ATCC BAA-500) protein is Elongation factor G 1.